We begin with the raw amino-acid sequence, 81 residues long: Large ribosomal subunit protein bL31B (81 aa).

The protein belongs to the bacterial ribosomal protein bL31 family. Type B subfamily. As to quaternary structure, part of the 50S ribosomal subunit.

In Lactobacillus acidophilus (strain ATCC 700396 / NCK56 / N2 / NCFM), this protein is Large ribosomal subunit protein bL31B.